Consider the following 103-residue polypeptide: MYAVFQSGGKQHRVAEGHTVRLEKLEVATGETIEFDQVLLVADGETVHVGAPLVEGGKVVAEVISHGRGEKVTIVKFRRRKHHDKKMGHRQWFTEVKITAINA.

This sequence belongs to the bacterial ribosomal protein bL21 family. As to quaternary structure, part of the 50S ribosomal subunit. Contacts protein L20.

In terms of biological role, this protein binds to 23S rRNA in the presence of protein L20. The sequence is that of Large ribosomal subunit protein bL21 from Shewanella loihica (strain ATCC BAA-1088 / PV-4).